A 464-amino-acid polypeptide reads, in one-letter code: Siroheme synthase (464 aa).

The segment at 1-203 is precorrin-2 dehydrogenase /sirohydrochlorin ferrochelatase; it reads MEFLPLFHNL…GQGAEAERML (203 aa). NAD(+) contacts are provided by residues 22 to 23 and 43 to 44; these read EI and PE. S128 carries the phosphoserine modification. Residues 216–464 form a uroporphyrinogen-III C-methyltransferase region; it reads GEVYLVGAGP…AWFEGAQATL (249 aa). P225 is an S-adenosyl-L-methionine binding site. Catalysis depends on D248, which acts as the Proton acceptor. K270 (proton donor) is an active-site residue. Residues 301 to 303, I306, 331 to 332, M383, and G412 contribute to the S-adenosyl-L-methionine site; these read GGD and TA.

In the N-terminal section; belongs to the precorrin-2 dehydrogenase / sirohydrochlorin ferrochelatase family. This sequence in the C-terminal section; belongs to the precorrin methyltransferase family.

The catalysed reaction is uroporphyrinogen III + 2 S-adenosyl-L-methionine = precorrin-2 + 2 S-adenosyl-L-homocysteine + H(+). It carries out the reaction precorrin-2 + NAD(+) = sirohydrochlorin + NADH + 2 H(+). It catalyses the reaction siroheme + 2 H(+) = sirohydrochlorin + Fe(2+). Its pathway is cofactor biosynthesis; adenosylcobalamin biosynthesis; precorrin-2 from uroporphyrinogen III: step 1/1. It participates in cofactor biosynthesis; adenosylcobalamin biosynthesis; sirohydrochlorin from precorrin-2: step 1/1. The protein operates within porphyrin-containing compound metabolism; siroheme biosynthesis; precorrin-2 from uroporphyrinogen III: step 1/1. It functions in the pathway porphyrin-containing compound metabolism; siroheme biosynthesis; siroheme from sirohydrochlorin: step 1/1. Its pathway is porphyrin-containing compound metabolism; siroheme biosynthesis; sirohydrochlorin from precorrin-2: step 1/1. In terms of biological role, multifunctional enzyme that catalyzes the SAM-dependent methylations of uroporphyrinogen III at position C-2 and C-7 to form precorrin-2 via precorrin-1. Then it catalyzes the NAD-dependent ring dehydrogenation of precorrin-2 to yield sirohydrochlorin. Finally, it catalyzes the ferrochelation of sirohydrochlorin to yield siroheme. This is Siroheme synthase from Pseudomonas syringae pv. syringae (strain B728a).